The chain runs to 237 residues: Uridylate kinase (237 aa).

9–12 is a binding site for ATP; the sequence is KLSG. Residues 17-22 are involved in allosteric activation by GTP; that stretch reads GTQGYG. Residue Gly-51 coordinates UMP. ATP contacts are provided by Gly-52 and Arg-56. UMP contacts are provided by residues Asp-71 and 132-139; that span reads CGNPFFTT. ATP contacts are provided by Thr-159, Tyr-165, and Asp-168.

This sequence belongs to the UMP kinase family. In terms of assembly, homohexamer.

It localises to the cytoplasm. It carries out the reaction UMP + ATP = UDP + ADP. It functions in the pathway pyrimidine metabolism; CTP biosynthesis via de novo pathway; UDP from UMP (UMPK route): step 1/1. With respect to regulation, allosterically activated by GTP. Inhibited by UTP. In terms of biological role, catalyzes the reversible phosphorylation of UMP to UDP. This Parasynechococcus marenigrum (strain WH8102) protein is Uridylate kinase.